Here is a 552-residue protein sequence, read N- to C-terminus: MAAKEVVFGGEARARMVEGVNILANAVKVTLGPKGRNVVIERSFGAPTVTKDGVSVAKEIELKDKLQNMGAQLVKEVASKTSDNAGDGTTTATVLAQAIVREGFKYVAAGINPMDLKRGIDKAVTALVAELKKASKPTTTSKEIAQVGSISANADETIGKLIADAMDKVGKEGVITVEDGKSLESELDVVEGMQFDRGYLSPYFINNPDKQAALLDNPFVLLFDKKISNIRDLLPTLEQVAKAGRPLLVIAEEVEGEALATLVVNTIRGILKVVAVKAPGFGDRRKAMLEDIAILTGGKVIAEEVGLTLEKVTLADLGQAKRIEVGKENTIIIDGAGAAGDIEARVKQVRVQIEEATSDYDREKLQERVAKLAGGVAVIKVGAATEVEMKEKKARVEDALHATRAAVEEGVVAGGGVAFLRARQAIGGTIKGDNADQDAGIKLVLKAIEAPLREIVNNAGGEASVVVNAVLAGKGNYGFNAANDTYGDMLELGILDPTKVTRTALQNAASVASLLLTTEAMVAEAPKDDAPAGGGGMPGMGGGMGGMGGMDM.

Residues 30–33 (TLGP), Lys-51, 87–91 (DGTTT), Gly-415, 480–482 (NAA), and Asp-496 each bind ATP.

This sequence belongs to the chaperonin (HSP60) family. As to quaternary structure, forms a cylinder of 14 subunits composed of two heptameric rings stacked back-to-back. Interacts with the co-chaperonin GroES.

It is found in the cytoplasm. It carries out the reaction ATP + H2O + a folded polypeptide = ADP + phosphate + an unfolded polypeptide.. Its function is as follows. Together with its co-chaperonin GroES, plays an essential role in assisting protein folding. The GroEL-GroES system forms a nano-cage that allows encapsulation of the non-native substrate proteins and provides a physical environment optimized to promote and accelerate protein folding. The chain is Chaperonin GroEL from Verminephrobacter eiseniae (strain EF01-2).